A 386-amino-acid polypeptide reads, in one-letter code: MKTAVLSLFLALQTYARVTGSPSGFAAGTTGGGSATPAAPSSLDELVQWITDDKPRVILIDRTWDFIGTEGTTTGKCCSMPSTTVCSGGTSKGQAWIQDHCDGGSWVSCKYDNAALTPLDVGSNKSIVGVGNKGVIKGKGLRVRNGNKNVIIQNIHITNLNPQYVWGGDAITLDNADKVWIDHNKISLIGRQFIVSGWGKAGHVTISNNEFDGRTSWSAGCNGKHYWTLLLLGEQDYYTFQGNWLHDVSGRAPHMGTDHTKSQIFFHGVNNYFQNVGGHAFDVDTNTWVLLEGNYFENVNTPLTDTSLRAGGKLYTTSTVAAAGACQDKLGYICEWNRLAGSGAWKDRTDADVKTKAAAFKSSLVGHYPVADVPAKVVANAGVGKL.

An N-terminal signal peptide occupies residues 1–16; it reads MKTAVLSLFLALQTYA. Cysteine 77 and cysteine 101 are joined by a disulfide. N-linked (GlcNAc...) asparagine glycosylation occurs at asparagine 124. Arginine 251 is a catalytic residue. Cysteine 326 and cysteine 334 form a disulfide bridge.

The protein belongs to the polysaccharide lyase 1 family.

The protein resides in the secreted. The catalysed reaction is Eliminative cleavage of (1-&gt;4)-alpha-D-galacturonan methyl ester to give oligosaccharides with 4-deoxy-6-O-methyl-alpha-D-galact-4-enuronosyl groups at their non-reducing ends.. Its function is as follows. Pectinolytic enzymes consist of four classes of enzymes: pectin lyase, polygalacturonase, pectin methylesterase and rhamnogalacturonase. Among pectinolytic enzymes, pectin lyase is the most important in depolymerization of pectin, since it cleaves internal glycosidic bonds of highly methylated pectins. This is Probable pectin lyase E (pelE) from Aspergillus fumigatus (strain CBS 144.89 / FGSC A1163 / CEA10) (Neosartorya fumigata).